Reading from the N-terminus, the 354-residue chain is Glucose 1-dehydrogenase (354 aa).

Residues 1-27 are disordered; the sequence is MKVIGVTRDDDGPQLLERERPSPDPGE. The span at 7-22 shows a compositional bias: basic and acidic residues; the sequence is TRDDDGPQLLERERPS. Zn(2+) is bound at residue D38. Position 40 (T40) interacts with substrate. The Zn(2+) site is built by H63 and E64. The disordered stretch occupies residues 91 to 110; that stretch reads PNGETNEYFRRGEPDMAPDG. Residues E114 and E150 each contribute to the substrate site. E150 is a binding site for Zn(2+). NADP(+) is bound by residues 181–184, 204–205, 269–271, and 298–300; these read NGSL, RR, LGI, and TVN. N300 contacts substrate.

It belongs to the zinc-containing alcohol dehydrogenase family. Glucose 1-dehydrogenase subfamily. Zn(2+) serves as cofactor.

It catalyses the reaction D-glucose + NAD(+) = D-glucono-1,5-lactone + NADH + H(+). It carries out the reaction D-glucose + NADP(+) = D-glucono-1,5-lactone + NADPH + H(+). In terms of biological role, catalyzes the NAD(P)(+)-dependent oxidation of D-glucose to D-gluconate via gluconolactone. Can utilize both NAD(+) and NADP(+) as electron acceptor. Is involved in the degradation of glucose through a modified Entner-Doudoroff pathway. This chain is Glucose 1-dehydrogenase, found in Haloarcula marismortui (strain ATCC 43049 / DSM 3752 / JCM 8966 / VKM B-1809) (Halobacterium marismortui).